The sequence spans 308 residues: Homoserine O-acetyltransferase (308 aa).

Cys-142 functions as the Acyl-thioester intermediate in the catalytic mechanism. Substrate contacts are provided by Lys-163 and Ser-192. His-235 functions as the Proton acceptor in the catalytic mechanism. Glu-237 is a catalytic residue. Substrate is bound at residue Arg-249.

This sequence belongs to the MetA family.

The protein resides in the cytoplasm. The catalysed reaction is L-homoserine + acetyl-CoA = O-acetyl-L-homoserine + CoA. It participates in amino-acid biosynthesis; L-methionine biosynthesis via de novo pathway; O-acetyl-L-homoserine from L-homoserine: step 1/1. Transfers an acetyl group from acetyl-CoA to L-homoserine, forming acetyl-L-homoserine. The polypeptide is Homoserine O-acetyltransferase (Rhizobium rhizogenes (strain K84 / ATCC BAA-868) (Agrobacterium radiobacter)).